We begin with the raw amino-acid sequence, 252 residues long: ATP synthase subunit a (252 aa).

Transmembrane regions (helical) follow at residues 29–49 (FTNV…FLFI), 87–107 (FFPL…IGLF), 117–137 (IMIT…YGFY), 146–166 (LFVP…IEVI), 196–216 (FIVS…LPLI), and 219–239 (VAIT…FTVL).

It belongs to the ATPase A chain family. As to quaternary structure, F-type ATPases have 2 components, CF(1) - the catalytic core - and CF(0) - the membrane proton channel. CF(1) has five subunits: alpha(3), beta(3), gamma(1), delta(1), epsilon(1). CF(0) has three main subunits: a(1), b(2) and c(9-12). The alpha and beta chains form an alternating ring which encloses part of the gamma chain. CF(1) is attached to CF(0) by a central stalk formed by the gamma and epsilon chains, while a peripheral stalk is formed by the delta and b chains.

The protein localises to the cell inner membrane. Key component of the proton channel; it plays a direct role in the translocation of protons across the membrane. The sequence is that of ATP synthase subunit a from Bartonella henselae (strain ATCC 49882 / DSM 28221 / CCUG 30454 / Houston 1) (Rochalimaea henselae).